A 270-amino-acid polypeptide reads, in one-letter code: DNA adenine methylase (270 aa).

W10, K14, D54, and D181 together coordinate S-adenosyl-L-methionine.

This sequence belongs to the N(4)/N(6)-methyltransferase family.

It catalyses the reaction a 2'-deoxyadenosine in DNA + S-adenosyl-L-methionine = an N(6)-methyl-2'-deoxyadenosine in DNA + S-adenosyl-L-homocysteine + H(+). Its function is as follows. An alpha subtype methylase, recognizes the double-stranded sequence 5'-GATC-3' and methylates A-2. Overexpression leads to hypermutability. May be involved in methyl-directed DNA mismatch repair, initiation of chromosome replication and gene expression. The sequence is that of DNA adenine methylase from Serratia marcescens.